We begin with the raw amino-acid sequence, 598 residues long: Biotin-dependent acyl-coenzyme A carboxylase alpha3 subunit (598 aa).

Positions 8–452 constitute a Biotin carboxylation domain; that stretch reads RIAKVLVANR…SFSVHTRWIE (445 aa). The ATP-grasp domain occupies 127-324; the sequence is RHIAARAQAP…LVLQQFKIAN (198 aa). Residue 155 to 216 coordinates ATP; it reads AKEHGVPIAI…ERYLDKPRHV (62 aa). 3 residues coordinate Mg(2+): E282, E295, and N297. 3 residues coordinate Mn(2+): E282, E295, and N297. The interval 506-531 is disordered; that stretch reads PAGVIRKKPKPRKRGGHTGAATSGDA. Residues 510–521 are compositionally biased toward basic residues; it reads IRKKPKPRKRGG. Residues 522 to 598 enclose the Biotinyl-binding domain; it reads HTGAATSGDA…TQGTVLAEIK (77 aa). K564 carries the post-translational modification N6-biotinyllysine.

In terms of assembly, the biotin-dependent acyl-CoA carboxylase complex is composed of AccA3, which contains the biotin carboxylase (BC) and biotin carboxyl carrier protein (BCCP) domains, and an AccD protein, which contains the carboxyl transferase (CT) domain. The cofactor is Mg(2+). Requires Mn(2+) as cofactor. Biotin serves as cofactor.

It catalyses the reaction N(6)-biotinyl-L-lysyl-[protein] + hydrogencarbonate + ATP = N(6)-carboxybiotinyl-L-lysyl-[protein] + ADP + phosphate + H(+). The protein operates within lipid metabolism; fatty acid biosynthesis. Its pathway is lipid metabolism; mycolic acid biosynthesis. Its function is as follows. Component of a biotin-dependent acyl-CoA carboxylase complex. This subunit catalyzes the ATP-dependent carboxylation of the biotin carried by the biotin carboxyl carrier (BCC) domain, resulting in the formation of carboxyl biotin. The polypeptide is Biotin-dependent acyl-coenzyme A carboxylase alpha3 subunit (bccA) (Mycobacterium leprae (strain TN)).